The sequence spans 257 residues: Acetylglutamate kinase (257 aa).

Residues 43–44 (GG), Arg65, and Asn157 contribute to the substrate site. ATP contacts are provided by residues 180-185 (DISSIL) and 208-210 (IIT).

Belongs to the acetylglutamate kinase family. ArgB subfamily. As to quaternary structure, homodimer.

Its subcellular location is the cytoplasm. It catalyses the reaction N-acetyl-L-glutamate + ATP = N-acetyl-L-glutamyl 5-phosphate + ADP. It participates in amino-acid biosynthesis; L-arginine biosynthesis; N(2)-acetyl-L-ornithine from L-glutamate: step 2/4. Functionally, catalyzes the ATP-dependent phosphorylation of N-acetyl-L-glutamate. In Buchnera aphidicola subsp. Acyrthosiphon pisum (strain 5A), this protein is Acetylglutamate kinase.